The sequence spans 390 residues: Centrosomal protein of 44 kDa (390 aa).

Positions 11 to 195 (RNLEQVLRLL…ISEDTLSPIT (185 aa)) are binds with microtubules and centrioles. Positions 233-267 (EITALQTMLAECQEKLKELTLIEKRLDCLEQKMKG) form a coiled coil. The interval 323-347 (KNKVGRPASIPLSSRYSTASSDSTP) is disordered. Phosphoserine occurs at positions 331 and 345. Positions 335–345 (SSRYSTASSDS) are enriched in low complexity. At Thr346 the chain carries Phosphothreonine. A coiled-coil region spans residues 361 to 385 (SEETTIQKMERMKKMFEETAELLKC).

As to quaternary structure, interacts with CROCC. Interacts with POC1B; the interaction is direct and recruits POC1B to centriolar microtubules. Binds to centriolar microtubules.

The protein resides in the cytoplasm. The protein localises to the cytoskeleton. It localises to the microtubule organizing center. Its subcellular location is the centrosome. It is found in the centriole. The protein resides in the spindle pole. The protein localises to the midbody. Centriole-enriched microtubule-binding protein involved in centriole biogenesis. In collaboration with CEP295 and POC1B, is required for the centriole-to-centrosome conversion by ensuring the formation of bona fide centriole wall. Functions as a linker component that maintains centrosome cohesion. Associates with CROCC and regulates its stability and localization to the centrosome. The sequence is that of Centrosomal protein of 44 kDa (CEP44) from Macaca fascicularis (Crab-eating macaque).